A 119-amino-acid polypeptide reads, in one-letter code: Nascent polypeptide-associated complex protein (119 aa).

An NAC-A/B domain is found at Arg-5–Gly-73.

This sequence belongs to the NAC-alpha family. In terms of assembly, homodimer. Interacts with the ribosome. Binds ribosomal RNA.

Its function is as follows. Contacts the emerging nascent chain on the ribosome. The sequence is that of Nascent polypeptide-associated complex protein from Thermoplasma volcanium (strain ATCC 51530 / DSM 4299 / JCM 9571 / NBRC 15438 / GSS1).